Here is a 310-residue protein sequence, read N- to C-terminus: Homoserine kinase (310 aa).

91-101 (PIGSGLGSSAC) is a binding site for ATP.

The protein belongs to the GHMP kinase family. Homoserine kinase subfamily.

The protein localises to the cytoplasm. The catalysed reaction is L-homoserine + ATP = O-phospho-L-homoserine + ADP + H(+). It functions in the pathway amino-acid biosynthesis; L-threonine biosynthesis; L-threonine from L-aspartate: step 4/5. Catalyzes the ATP-dependent phosphorylation of L-homoserine to L-homoserine phosphate. The sequence is that of Homoserine kinase from Escherichia coli O139:H28 (strain E24377A / ETEC).